The chain runs to 188 residues: Peroxiredoxin y4vD (188 aa).

The region spanning 2 to 152 (PVKKRVPFVA…VEQWFEEEGF (151 aa)) is the Thioredoxin domain. Catalysis depends on C56, which acts as the Cysteine sulfenic acid (-SOH) intermediate (for peroxiredoxin activity).

It belongs to the peroxiredoxin family. Prx5 subfamily. As to quaternary structure, monomer.

The enzyme catalyses a hydroperoxide + 2 glutathione = an alcohol + glutathione disulfide + H2O. In terms of biological role, thiol-specific peroxidase that catalyzes the reduction of hydrogen peroxide and organic hydroperoxides to water and alcohols, respectively. Plays a role in cell protection against oxidative stress by detoxifying peroxides. This chain is Peroxiredoxin y4vD, found in Sinorhizobium fredii (strain NBRC 101917 / NGR234).